Consider the following 158-residue polypeptide: Transcription elongation factor GreA (158 aa).

A coiled-coil region spans residues 4–70; that stretch reads QKQYPMTQEG…IEQDIQRIEH (67 aa).

It belongs to the GreA/GreB family.

Functionally, necessary for efficient RNA polymerase transcription elongation past template-encoded arresting sites. The arresting sites in DNA have the property of trapping a certain fraction of elongating RNA polymerases that pass through, resulting in locked ternary complexes. Cleavage of the nascent transcript by cleavage factors such as GreA or GreB allows the resumption of elongation from the new 3'terminus. GreA releases sequences of 2 to 3 nucleotides. The polypeptide is Transcription elongation factor GreA (Staphylococcus aureus (strain Mu3 / ATCC 700698)).